The primary structure comprises 238 residues: Ribonuclease PH (238 aa).

Residues arginine 86 and 124 to 126 contribute to the phosphate site; that span reads GTR.

The protein belongs to the RNase PH family. As to quaternary structure, homohexameric ring arranged as a trimer of dimers.

It carries out the reaction tRNA(n+1) + phosphate = tRNA(n) + a ribonucleoside 5'-diphosphate. Its function is as follows. Phosphorolytic 3'-5' exoribonuclease that plays an important role in tRNA 3'-end maturation. Removes nucleotide residues following the 3'-CCA terminus of tRNAs; can also add nucleotides to the ends of RNA molecules by using nucleoside diphosphates as substrates, but this may not be physiologically important. Probably plays a role in initiation of 16S rRNA degradation (leading to ribosome degradation) during starvation. This chain is Ribonuclease PH, found in Serratia proteamaculans (strain 568).